A 310-amino-acid chain; its full sequence is Ribosomal RNA small subunit methyltransferase H (310 aa).

S-adenosyl-L-methionine-binding positions include 33–35 (GGH), aspartate 52, phenylalanine 79, aspartate 98, and glutamine 105.

This sequence belongs to the methyltransferase superfamily. RsmH family.

It is found in the cytoplasm. The catalysed reaction is cytidine(1402) in 16S rRNA + S-adenosyl-L-methionine = N(4)-methylcytidine(1402) in 16S rRNA + S-adenosyl-L-homocysteine + H(+). Its function is as follows. Specifically methylates the N4 position of cytidine in position 1402 (C1402) of 16S rRNA. The chain is Ribosomal RNA small subunit methyltransferase H from Campylobacter jejuni (strain RM1221).